Consider the following 167-residue polypeptide: uncharacterized protein (167 aa).

The segment covering 1–10 (MPLRRCRAWR) has biased composition (basic residues). The segment at 1 to 23 (MPLRRCRAWRGHSQPGTGSRSNE) is disordered.

This is an uncharacterized protein from Sinorhizobium fredii (strain NBRC 101917 / NGR234).